The sequence spans 919 residues: Transcriptional regulatory protein EDS1 (919 aa).

The tract at residues 1-54 (MSHHVPNLYGTPIRDPHERKRNSASMGEVNQSVSSRNCERGSEKGTKQRKKASR) is disordered. Positions 23 to 36 (SASMGEVNQSVSSR) are enriched in polar residues. Residues 37-46 (NCERGSEKGT) are compositionally biased toward basic and acidic residues. Positions 56 to 85 (CDQCRRKRIKCRFDKHTGVCQGCLEVGEKC) form a DNA-binding region, zn(2)-C6 fungal-type. The tract at residues 297 to 338 (AGCPNKKLGTDGRSDKWDKNSTWKPVYRSSNPSHPSTEKNVS) is disordered. Residues 304–317 (LGTDGRSDKWDKNS) show a composition bias toward basic and acidic residues. The span at 318 to 338 (TWKPVYRSSNPSHPSTEKNVS) shows a compositional bias: polar residues.

Binds DNA in a sequence-specific manner.

The protein localises to the nucleus. The protein is Transcriptional regulatory protein EDS1 (EDS1) of Saccharomyces cerevisiae (strain RM11-1a) (Baker's yeast).